The sequence spans 268 residues: Mesoderm posterior protein 1 (268 aa).

Positions 17–93 (AAWGPTRRPP…RQSASEREKL (77 aa)) are disordered. Positions 36–48 (LVSSPDSWGSTPA) are enriched in polar residues. Residues 66 to 86 (APSVGRRGARSSRLGSGQRQS) are compositionally biased toward low complexity. The 55-residue stretch at 82–136 (GQRQSASEREKLRMRTLARALHELRRFLPPSVAPAGQSLTKIETLRLAIRYIGHL) folds into the bHLH domain. The CPLCP signature appears at 163 to 167 (CPLCP). 2 tandem repeats follow at residues 182–183 (GQ) and 184–185 (GQ). The tract at residues 182 to 185 (GQGQ) is 2 X 2 AA tandem repeats of G-Q.

It is found in the nucleus. Its function is as follows. Transcription factor. Plays a role in the epithelialization of somitic mesoderm and in the development of cardiac mesoderm. Defines the rostrocaudal patterning of the somites by participating in distinct Notch pathways. This Homo sapiens (Human) protein is Mesoderm posterior protein 1 (MESP1).